We begin with the raw amino-acid sequence, 116 residues long: SPbeta prophage-derived uncharacterized protein YoqA (116 aa).

The chain is SPbeta prophage-derived uncharacterized protein YoqA (yoqA) from Bacillus subtilis (strain 168).